The sequence spans 34 residues: Photosystem II reaction center protein M (34 aa).

A helical transmembrane segment spans residues 5-25 (ILGLIATALFIIIPTSFLLIL).

This sequence belongs to the PsbM family. In terms of assembly, PSII is composed of 1 copy each of membrane proteins PsbA, PsbB, PsbC, PsbD, PsbE, PsbF, PsbH, PsbI, PsbJ, PsbK, PsbL, PsbM, PsbT, PsbX, PsbY, PsbZ, Psb30/Ycf12, at least 3 peripheral proteins of the oxygen-evolving complex and a large number of cofactors. It forms dimeric complexes.

The protein localises to the plastid. It is found in the chloroplast thylakoid membrane. One of the components of the core complex of photosystem II (PSII). PSII is a light-driven water:plastoquinone oxidoreductase that uses light energy to abstract electrons from H(2)O, generating O(2) and a proton gradient subsequently used for ATP formation. It consists of a core antenna complex that captures photons, and an electron transfer chain that converts photonic excitation into a charge separation. This subunit is found at the monomer-monomer interface. The sequence is that of Photosystem II reaction center protein M from Nephroselmis olivacea (Green alga).